Consider the following 93-residue polypeptide: Small ribosomal subunit protein bS18 (93 aa).

The segment covering 1–11 (MAPSARNRKPG) has biased composition (basic residues). A disordered region spans residues 1–27 (MAPSARNRKPGARSMAKAAALRKPKKK).

The protein belongs to the bacterial ribosomal protein bS18 family. In terms of assembly, part of the 30S ribosomal subunit. Forms a tight heterodimer with protein bS6.

Binds as a heterodimer with protein bS6 to the central domain of the 16S rRNA, where it helps stabilize the platform of the 30S subunit. The polypeptide is Small ribosomal subunit protein bS18 (Salinispora tropica (strain ATCC BAA-916 / DSM 44818 / JCM 13857 / NBRC 105044 / CNB-440)).